We begin with the raw amino-acid sequence, 132 residues long: Small ribosomal subunit protein uS8 (132 aa).

It belongs to the universal ribosomal protein uS8 family. Part of the 30S ribosomal subunit. Contacts proteins S5 and S12.

One of the primary rRNA binding proteins, it binds directly to 16S rRNA central domain where it helps coordinate assembly of the platform of the 30S subunit. The protein is Small ribosomal subunit protein uS8 of Syntrophomonas wolfei subsp. wolfei (strain DSM 2245B / Goettingen).